A 118-amino-acid polypeptide reads, in one-letter code: Small ribosomal subunit protein uS13 (118 aa).

A disordered region spans residues 94–118 (GLPVHGQRTKTNARTRKGPAKSITR).

The protein belongs to the universal ribosomal protein uS13 family. In terms of assembly, part of the 30S ribosomal subunit. Forms a loose heterodimer with protein S19. Forms two bridges to the 50S subunit in the 70S ribosome.

Functionally, located at the top of the head of the 30S subunit, it contacts several helices of the 16S rRNA. In the 70S ribosome it contacts the 23S rRNA (bridge B1a) and protein L5 of the 50S subunit (bridge B1b), connecting the 2 subunits; these bridges are implicated in subunit movement. Contacts the tRNAs in the A and P-sites. The polypeptide is Small ribosomal subunit protein uS13 (Acidithiobacillus ferrooxidans (strain ATCC 23270 / DSM 14882 / CIP 104768 / NCIMB 8455) (Ferrobacillus ferrooxidans (strain ATCC 23270))).